A 423-amino-acid chain; its full sequence is Probable sucrose-phosphate synthase (423 aa).

Belongs to the glycosyltransferase 1 family.

The enzyme catalyses beta-D-fructose 6-phosphate + UDP-alpha-D-glucose = sucrose 6(F)-phosphate + UDP + H(+). Plays a role in sucrose synthesis by catalyzing the first step of sucrose biosynthesis from UDP-glucose and fructose-6-phosphate. The chain is Probable sucrose-phosphate synthase from Thermosipho melanesiensis (strain DSM 12029 / CIP 104789 / BI429).